Consider the following 585-residue polypeptide: DNA mismatch repair protein MutL (585 aa).

The protein belongs to the DNA mismatch repair MutL/HexB family.

Its function is as follows. This protein is involved in the repair of mismatches in DNA. It is required for dam-dependent methyl-directed DNA mismatch repair. May act as a 'molecular matchmaker', a protein that promotes the formation of a stable complex between two or more DNA-binding proteins in an ATP-dependent manner without itself being part of a final effector complex. The protein is DNA mismatch repair protein MutL of Methanoculleus marisnigri (strain ATCC 35101 / DSM 1498 / JR1).